The sequence spans 317 residues: Transcriptional activator protein med (317 aa).

The signal sequence occupies residues 1–17 (MITRLVMIFSVLLLLSG). Cysteine 18 carries the N-palmitoyl cysteine lipid modification. A lipid anchor (S-diacylglycerol cysteine) is attached at cysteine 18.

It belongs to the BMP lipoprotein family.

The protein localises to the cell membrane. Functionally, positive activator of the comK gene. The protein is Transcriptional activator protein med (med) of Bacillus subtilis (strain 168).